Consider the following 97-residue polypeptide: Mapk-regulated corepressor-interacting protein 1 (97 aa).

The interval 1–30 (MTSSPVSRVVYNGKRNSSHRSPPNSSEIFT) is disordered. At S21 the chain carries Phosphoserine. T30 carries the phosphothreonine modification. Y41 is subject to Phosphotyrosine. The tract at residues 77-97 (TFRPIDLSDLKRRNTQDAKKS) is disordered. The PXDLS motif motif lies at 80-84 (PIDLS). Positions 82-97 (DLSDLKRRNTQDAKKS) are enriched in basic and acidic residues.

Belongs to the MCRIP family. As to quaternary structure, interacts (unphosphorylated form, via the PXDLS motif) with CTBP1, competitively inhibiting CTBP-ZEB1 interaction. Interacts with CTBP2. Interacts with MCRIP2. Interacts with DDX6. Phosphorylation by MAPK3/1 (ERK1/2) regulates MCRIP1 binding to CTBP(s).

It localises to the nucleus. It is found in the cytoplasm. The protein localises to the stress granule. In terms of biological role, the phosphorylation status of MCRIP1 functions as a molecular switch to regulate epithelial-mesenchymal transition. Unphosphorylated MCRIP1 binds to and inhibits the transcriptional corepressor CTBP(s). When phosphorylated by MAPK/ERK, MCRIP1 releases CTBP(s) resulting in transcriptional silencing of the E-cadherin gene and induction of epithelial-mesenchymal transition. The chain is Mapk-regulated corepressor-interacting protein 1 (MCRIP1) from Bos taurus (Bovine).